The chain runs to 364 residues: Pre-small/secreted glycoprotein (364 aa).

The first 32 residues, 1–32, serve as a signal peptide directing secretion; that stretch reads MGVTGILQLPRDRFKRTSFFLWVIILFQRTFS. N-linked (GlcNAc...) asparagine; by host glycosylation is present at asparagine 40. Intrachain disulfides connect cysteine 108–cysteine 135 and cysteine 121–cysteine 147. Asparagine 204, asparagine 228, asparagine 238, asparagine 257, and asparagine 268 each carry an N-linked (GlcNAc...) asparagine; by host glycan.

This sequence belongs to the filoviruses glycoprotein family. In terms of assembly, homodimer; disulfide-linked. The homodimers are linked by two disulfide bonds in a parallel orientation. Monomer. This precursor is processed into mature sGP and delta-peptide by host furin or furin-like proteases. The cleavage site corresponds to the furin optimal cleavage sequence [KR]-X-[KR]-R. In terms of processing, N-glycosylated. Post-translationally, O-glycosylated.

The protein resides in the secreted. In terms of biological role, seems to possess an anti-inflammatory activity as it can reverse the barrier-decreasing effects of TNF alpha. Might therefore contribute to the lack of inflammatory reaction seen during infection in spite the of extensive necrosis and massive virus production. Does not seem to be involved in activation of primary macrophages. Does not seem to interact specifically with neutrophils. Its function is as follows. Viroporin that permeabilizes mammalian cell plasma membranes. It acts by altering permeation of ionic compounds and small molecules. This activity may lead to viral enterotoxic activity. The polypeptide is Pre-small/secreted glycoprotein (GP) (Zaire ebolavirus (strain Eckron-76) (ZEBOV)).